The chain runs to 444 residues: Enolase (444 aa).

Residues His163 and Glu172 each coordinate substrate. Glu215 (proton donor) is an active-site residue. The Mg(2+) site is built by Asp250, Glu300, and Asp327. Glu300 and Asp327 together coordinate substrate. Lys352 (proton acceptor) is an active-site residue. Residues 379-382 (SHRS) and Lys403 contribute to the substrate site.

This sequence belongs to the enolase family. As to quaternary structure, homodimer. Mg(2+) serves as cofactor.

The protein localises to the cytoplasm. It carries out the reaction (2R)-2-phosphoglycerate = phosphoenolpyruvate + H2O. It participates in carbohydrate degradation; glycolysis; pyruvate from D-glyceraldehyde 3-phosphate: step 4/5. The chain is Enolase (PGH1) from Solanum lycopersicum (Tomato).